Here is a 348-residue protein sequence, read N- to C-terminus: 4-hydroxy-2-oxovalerate aldolase 3 (348 aa).

Residues 8 to 260 (ITVHDMTLRD…ETGVDVWKIQ (253 aa)) form the Pyruvate carboxyltransferase domain. Residue 16-17 (RD) coordinates substrate. Residue Asp-17 participates in Mn(2+) binding. The active-site Proton acceptor is His-20. Substrate is bound by residues Ser-170 and His-199. His-199 and His-201 together coordinate Mn(2+). Tyr-290 serves as a coordination point for substrate.

This sequence belongs to the 4-hydroxy-2-oxovalerate aldolase family.

The catalysed reaction is (S)-4-hydroxy-2-oxopentanoate = acetaldehyde + pyruvate. This Burkholderia lata (strain ATCC 17760 / DSM 23089 / LMG 22485 / NCIMB 9086 / R18194 / 383) protein is 4-hydroxy-2-oxovalerate aldolase 3.